Consider the following 68-residue polypeptide: uncharacterized protein (68 aa).

A signal peptide spans 1–27; that stretch reads MKGLLCFIYILSAILIGCVFLNKDVEA.

This is an uncharacterized protein from Invertebrate iridescent virus 6 (IIV-6).